We begin with the raw amino-acid sequence, 173 residues long: CDP-archaeol synthase (173 aa).

Helical transmembrane passes span 15–35, 59–79, 84–104, 118–138, and 142–162; these read GLWFILPAYIANLSACLFGGG, GFIVGVLAGAVVGLGEGLVVG, AGDGFILGLGAMAGDAVGSFV, VLDQLDFFVGAVLLYYLVYGW, and GWVLVGLAILTLALHWLTNVI.

Belongs to the CDP-archaeol synthase family. The cofactor is Mg(2+).

Its subcellular location is the cell membrane. The catalysed reaction is 2,3-bis-O-(geranylgeranyl)-sn-glycerol 1-phosphate + CTP + H(+) = CDP-2,3-bis-O-(geranylgeranyl)-sn-glycerol + diphosphate. Its pathway is membrane lipid metabolism; glycerophospholipid metabolism. Its function is as follows. Catalyzes the formation of CDP-2,3-bis-(O-geranylgeranyl)-sn-glycerol (CDP-archaeol) from 2,3-bis-(O-geranylgeranyl)-sn-glycerol 1-phosphate (DGGGP) and CTP. This reaction is the third ether-bond-formation step in the biosynthesis of archaeal membrane lipids. In Methanopyrus kandleri (strain AV19 / DSM 6324 / JCM 9639 / NBRC 100938), this protein is CDP-archaeol synthase.